A 258-amino-acid polypeptide reads, in one-letter code: UPF0246 protein YaaA (258 aa).

The protein belongs to the UPF0246 family.

This is UPF0246 protein YaaA from Escherichia coli (strain K12 / MC4100 / BW2952).